The primary structure comprises 200 residues: MRIIGLTGGIGSGKSTVARIWQGCGAIVIDADAIARVLMEPGSTVLEEVSQVFGRDLLDAEGKLRRAELAARAFISEEKTAQLNSITHPAIRRQIRRGIECARAEGVQVLVLDHPLLFESGMSDLVDDVVVVDVPAELRVRRLVDLRGLKEEDARHRIMRQMSDEDRRMRADYVIDNSGSRDVLERLARELWQRFATQVE.

The DPCK domain maps to 3-200 (IIGLTGGIGS…LWQRFATQVE (198 aa)). 11 to 16 (GSGKST) is an ATP binding site.

It belongs to the CoaE family.

Its subcellular location is the cytoplasm. The enzyme catalyses 3'-dephospho-CoA + ATP = ADP + CoA + H(+). The protein operates within cofactor biosynthesis; coenzyme A biosynthesis; CoA from (R)-pantothenate: step 5/5. Catalyzes the phosphorylation of the 3'-hydroxyl group of dephosphocoenzyme A to form coenzyme A. The polypeptide is Dephospho-CoA kinase (Corynebacterium diphtheriae (strain ATCC 700971 / NCTC 13129 / Biotype gravis)).